The sequence spans 251 residues: Hydroxyacylglutathione hydrolase (251 aa).

Zn(2+) is bound by residues His53, His55, Asp57, His58, His110, Asp127, and His165.

This sequence belongs to the metallo-beta-lactamase superfamily. Glyoxalase II family. In terms of assembly, monomer. Zn(2+) serves as cofactor.

The enzyme catalyses an S-(2-hydroxyacyl)glutathione + H2O = a 2-hydroxy carboxylate + glutathione + H(+). It participates in secondary metabolite metabolism; methylglyoxal degradation; (R)-lactate from methylglyoxal: step 2/2. Its function is as follows. Thiolesterase that catalyzes the hydrolysis of S-D-lactoyl-glutathione to form glutathione and D-lactic acid. In Buchnera aphidicola subsp. Acyrthosiphon pisum (strain APS) (Acyrthosiphon pisum symbiotic bacterium), this protein is Hydroxyacylglutathione hydrolase.